The primary structure comprises 213 residues: MKTKILLLNFIIIFFLINVNLAIKKDSPFKEIQKNNNNKKENHDAINYYEDEDGFDVTIKDCISILVPYGKCTKIKSPFKKCPYKSIFISSNSTTPIIPNNNYNNNNNNKNKNNGSNQYIINLFENSKCYEKVNRNKNKIFKNFHEEKNYKESKKNELIINCKDKKLNKFNNNEIRVVCPISSKFDSSTSSISINTLAILSLLFLIFINKLIN.

The N-terminal stretch at 1–22 (MKTKILLLNFIIIFFLINVNLA) is a signal peptide. Residues 23 to 191 (IKKDSPFKEI…SSKFDSSTSS (169 aa)) lie on the Extracellular side of the membrane. N-linked (GlcNAc...) asparagine glycosylation is found at N92 and N114. Residues 192 to 212 (ISINTLAILSLLFLIFINKLI) traverse the membrane as a helical segment. Residue N213 is a topological domain, cytoplasmic.

The protein resides in the membrane. This Dictyostelium discoideum (Social amoeba) protein is Putative transmembrane protein DDB_G0267860.